The chain runs to 406 residues: Plasma serine protease inhibitor (406 aa).

A signal peptide spans 1–19; the sequence is MQLFLLLCLVLLSPQGASL. The propeptide at 20–25 is removed in mature form; the sequence is HRHHPR. O-linked (GalNAc...) threonine glycosylation is present at Thr39. N-linked (GlcNAc...) asparagine glycosylation is found at Asn249, Asn262, and Asn338.

It belongs to the serpin family. In terms of assembly, forms protease inhibiting heterodimers in extracellular body fluids with serine proteases such as activated protein C/coagulation factor V/F5, acrosin/ACR, chymotrypsinogen B/CTRB1, prothrombin/F2, factor Xa/F10, factor XI/F11, kallikrein/KLKB1, tissue kallikrein, trypsin/PRSS1, prostate specific antigen/KLK3, tissue plasminogen activator/PLAT and urinary plasminogen activator/PLAU. Forms membrane-anchored serine proteases inhibiting heterodimers with TMPRSS7 and TMPRSS11E. Interacts with SEMG2. N- and O-glycosylated. N-glycosylation consists of a mixture of sialylated bi- (including sialyl-Lewis X epitopes), tri- and tetra-antennary complex-type chains; affects the maximal heparin- and thrombomodulin-enhanced rates of thrombin inhibition. O-glycosylated with core 1 or possibly core 8 glycans. Further modified with 2 sialic acid residues. In terms of processing, proteolytically cleaved. Inhibition of proteases is accompanied by formation of a stable enzyme-inhibitor complex and by degradation of the serpin to lower molecular weight derivatives. Proteolytically cleaved at the N-terminus; inhibits slightly the heparin- and thrombomodulin-enhanced rates of thrombin inhibition. In terms of tissue distribution, predominantly expressed in the epithelium of seminal vesicles. Expressed in the proximal tubular epithelium of the kidney. Expressed in the superficial and more differentiated epidermal keratinocytes of the skin. Expressed in megakaryocytes and platelets. Expressed poorly in kidney tumor cells compared to non tumor kidney tissues. Expressed in spermatozoa. Present in very high concentration in seminal plasma. Present in high concentration in plasma, synovial and Graaf follicle fluids. Present in low concentration in breast milk and in amniotic fluids. Present in very low concentration in urine, cerebrospinal fluids, saliva and tears (at protein level). Strongly expressed in liver. Expressed in kidney, spleen, pancreas, skeletal muscle, heart, testes, ovary, interstitial Leydig cells, epididymal glands, seminal vesicles and prostate.

Its subcellular location is the secreted. It localises to the extracellular space. Its activity is regulated as follows. Its inhibitory activity is greatly enhanced in the presence of glycosaminoglycans, heparin, thrombomodulin and phospholipids vesicles. In terms of biological role, heparin-dependent serine protease inhibitor acting in body fluids and secretions. Inactivates serine proteases by binding irreversibly to their serine activation site. Involved in the regulation of intravascular and extravascular proteolytic activities. Plays hemostatic roles in the blood plasma. Acts as a procoagulant and pro-inflammatory factor by inhibiting the anticoagulant activated protein C factor as well as the generation of activated protein C factor by the thrombin/thrombomodulin complex. Acts as an anticoagulant factor by inhibiting blood coagulation factors like prothrombin, factor XI, factor Xa, plasma kallikrein and fibrinolytic enzymes such as tissue- and urinary-type plasminogen activators. In seminal plasma, inactivates several serine proteases implicated in the reproductive system. Inhibits the serpin acrosin; indirectly protects component of the male genital tract from being degraded by excessive released acrosin. Inhibits tissue- and urinary-type plasminogen activator, prostate-specific antigen and kallikrein activities; has a control on the sperm motility and fertilization. Inhibits the activated protein C-catalyzed degradation of SEMG1 and SEMG2; regulates the degradation of semenogelin during the process of transfer of spermatozoa from the male reproductive tract into the female tract. In urine, inhibits urinary-type plasminogen activator and kallikrein activities. Inactivates membrane-anchored serine proteases activities such as MPRSS7 and TMPRSS11E. Inhibits urinary-type plasminogen activator-dependent tumor cell invasion and metastasis. May also play a non-inhibitory role in seminal plasma and urine as a hydrophobic hormone carrier by its binding to retinoic acid. The chain is Plasma serine protease inhibitor (SERPINA5) from Homo sapiens (Human).